The sequence spans 215 residues: Large ribosomal subunit protein bL25 (215 aa).

A compositionally biased stretch (polar residues) spans 1-10 (MAKSASNQLR). Disordered stretches follow at residues 1-25 (MAKSASNQLRVTVRTETGKGASRRA) and 187-215 (ELEGEVAGAEEAEEAAVEAGEAEAAGESE).

It belongs to the bacterial ribosomal protein bL25 family. CTC subfamily. In terms of assembly, part of the 50S ribosomal subunit; part of the 5S rRNA/L5/L18/L25 subcomplex. Contacts the 5S rRNA. Binds to the 5S rRNA independently of L5 and L18.

This is one of the proteins that binds to the 5S RNA in the ribosome where it forms part of the central protuberance. The sequence is that of Large ribosomal subunit protein bL25 from Mycobacterium bovis (strain ATCC BAA-935 / AF2122/97).